The primary structure comprises 521 residues: GMP synthase [glutamine-hydrolyzing] (521 aa).

Residues 5-197 enclose the Glutamine amidotransferase type-1 domain; that stretch reads KILILDFGSQ…VLDICGAQPG (193 aa). Residue cysteine 81 is the Nucleophile of the active site. Catalysis depends on residues histidine 171 and glutamate 173. Residues 198–390 form the GMPS ATP-PPase domain; the sequence is WTMPNYIEEA…LGLPREMVYR (193 aa). 225-231 contacts ATP; sequence SGGVDSS.

In terms of assembly, homodimer.

The enzyme catalyses XMP + L-glutamine + ATP + H2O = GMP + L-glutamate + AMP + diphosphate + 2 H(+). It functions in the pathway purine metabolism; GMP biosynthesis; GMP from XMP (L-Gln route): step 1/1. In terms of biological role, catalyzes the synthesis of GMP from XMP. The sequence is that of GMP synthase [glutamine-hydrolyzing] from Neisseria meningitidis serogroup C (strain 053442).